We begin with the raw amino-acid sequence, 366 residues long: Histidinol-phosphate aminotransferase 2 (366 aa).

Residues 1–11 show a composition bias toward polar residues; it reads MQVKDQLSSLQ. Residues 1 to 21 form a disordered region; that stretch reads MQVKDQLSSLQPYKPGKSPEQ. Lys222 bears the N6-(pyridoxal phosphate)lysine mark.

Belongs to the class-II pyridoxal-phosphate-dependent aminotransferase family. Histidinol-phosphate aminotransferase subfamily. Homodimer. It depends on pyridoxal 5'-phosphate as a cofactor.

It carries out the reaction L-histidinol phosphate + 2-oxoglutarate = 3-(imidazol-4-yl)-2-oxopropyl phosphate + L-glutamate. It functions in the pathway amino-acid biosynthesis; L-histidine biosynthesis; L-histidine from 5-phospho-alpha-D-ribose 1-diphosphate: step 7/9. The protein is Histidinol-phosphate aminotransferase 2 of Bacillus thuringiensis subsp. konkukian (strain 97-27).